A 100-amino-acid polypeptide reads, in one-letter code: Nucleoid-associated protein HPSH_00175 (100 aa).

It belongs to the YbaB/EbfC family. Homodimer.

The protein localises to the cytoplasm. Its subcellular location is the nucleoid. Functionally, binds to DNA and alters its conformation. May be involved in regulation of gene expression, nucleoid organization and DNA protection. The polypeptide is Nucleoid-associated protein HPSH_00175 (Helicobacter pylori (strain Shi470)).